A 31-amino-acid polypeptide reads, in one-letter code: Cycloviolacin-O14 (31 aa).

The cyclopeptide (Gly-Asn) cross-link spans 1–31 (GSIPACGESCFKGKCYTPGCSCSKYPLCAKN). 3 cysteine pairs are disulfide-bonded: Cys-6–Cys-20, Cys-10–Cys-22, and Cys-15–Cys-28.

This is a cyclic peptide. Expressed in leaves and petioles but not in petals, roots and runners (at protein level).

In terms of biological role, probably participates in a plant defense mechanism. Has hemolytic activity. This is Cycloviolacin-O14 from Viola odorata (Sweet violet).